The chain runs to 229 residues: Chromophore lyase CpcT/CpeT 1 (229 aa).

The protein belongs to the CpcT/CpeT biliprotein lyase family.

In terms of biological role, covalently attaches a chromophore to Cys residue(s) of phycobiliproteins. The polypeptide is Chromophore lyase CpcT/CpeT 1 (Gloeobacter violaceus (strain ATCC 29082 / PCC 7421)).